Consider the following 711-residue polypeptide: Polyribonucleotide nucleotidyltransferase (711 aa).

Residues Asp-486 and Asp-492 each contribute to the Mg(2+) site. Positions 553–612 (PRIHTIKINPDKIKDVIGKGGSVIRALTEETGTTIEIEDDGTVKIAATDGEKAKNAIRRI) constitute a KH domain. Positions 622–690 (GRVYNGKVTR…RQGRIRLSIK (69 aa)) constitute an S1 motif domain. The interval 689 to 711 (IKEATEQSQPAAAPEAPAAEQGE) is disordered. Residues 694–711 (EQSQPAAAPEAPAAEQGE) are compositionally biased toward low complexity.

It belongs to the polyribonucleotide nucleotidyltransferase family. Component of the RNA degradosome, which is a multiprotein complex involved in RNA processing and mRNA degradation. Mg(2+) is required as a cofactor.

Its subcellular location is the cytoplasm. The enzyme catalyses RNA(n+1) + phosphate = RNA(n) + a ribonucleoside 5'-diphosphate. Functionally, involved in mRNA degradation. Catalyzes the phosphorolysis of single-stranded polyribonucleotides processively in the 3'- to 5'-direction. The polypeptide is Polyribonucleotide nucleotidyltransferase (Escherichia fergusonii (strain ATCC 35469 / DSM 13698 / CCUG 18766 / IAM 14443 / JCM 21226 / LMG 7866 / NBRC 102419 / NCTC 12128 / CDC 0568-73)).